The primary structure comprises 268 residues: Zinc transporter ZupT (268 aa).

The next 8 helical transmembrane spans lie at 5 to 25, 38 to 58, 72 to 92, 124 to 144, 152 to 172, 187 to 207, 211 to 231, and 248 to 268; these read ILFA…GSII, TVSL…EIFV, AGYI…ALID, MGLF…LATF, TLGI…GLAV, FVLS…GFFL, LFTE…MVYI, and LAIG…LLFL. Residues asparagine 136 and glutamate 139 each contribute to the Fe(2+) site. Positions 139 and 164 each coordinate Zn(2+). Fe(2+) contacts are provided by asparagine 165, glutamate 168, and glutamate 197. Glutamate 168 serves as a coordination point for Zn(2+).

This sequence belongs to the ZIP transporter (TC 2.A.5) family. ZupT subfamily.

Its subcellular location is the cell inner membrane. The catalysed reaction is Zn(2+)(in) = Zn(2+)(out). Functionally, mediates zinc uptake. May also transport other divalent cations. The polypeptide is Zinc transporter ZupT (Chlorobaculum parvum (strain DSM 263 / NCIMB 8327) (Chlorobium vibrioforme subsp. thiosulfatophilum)).